A 277-amino-acid chain; its full sequence is 4-hydroxy-tetrahydrodipicolinate reductase (277 aa).

Residues 11 to 16 and 110 to 112 contribute to the NAD(+) site; these read GALGRM and GTT. Residue histidine 166 is the Proton donor/acceptor of the active site. Histidine 167 serves as a coordination point for (S)-2,3,4,5-tetrahydrodipicolinate. The active-site Proton donor is the lysine 170. 176 to 177 lines the (S)-2,3,4,5-tetrahydrodipicolinate pocket; that stretch reads GT.

Belongs to the DapB family.

Its subcellular location is the cytoplasm. The catalysed reaction is (S)-2,3,4,5-tetrahydrodipicolinate + NAD(+) + H2O = (2S,4S)-4-hydroxy-2,3,4,5-tetrahydrodipicolinate + NADH + H(+). It catalyses the reaction (S)-2,3,4,5-tetrahydrodipicolinate + NADP(+) + H2O = (2S,4S)-4-hydroxy-2,3,4,5-tetrahydrodipicolinate + NADPH + H(+). It participates in amino-acid biosynthesis; L-lysine biosynthesis via DAP pathway; (S)-tetrahydrodipicolinate from L-aspartate: step 4/4. Its function is as follows. Catalyzes the conversion of 4-hydroxy-tetrahydrodipicolinate (HTPA) to tetrahydrodipicolinate. The sequence is that of 4-hydroxy-tetrahydrodipicolinate reductase from Synechococcus sp. (strain CC9605).